The chain runs to 582 residues: MHNDKDLSTWQTFRRLWPTIAPFKAGLIVAGVALILNAASDTFMLSLLKPLLDDGFGKTDRSVLVWMPLVVIGLMILRGITSYVSSYCISWVSGKVVMTMRRRLFGHMMGMPVSFFDKQSTGTLLSRITYDSEQVASSSSGALITVVREGASIIGLFIMMFYYSWQLSIILIVLAPIVSIAIRVVSKRFRNISKNMQNTMGQVTTSAEQMLKGHKEVLIFGGQEVETKRFDKVSNRMRLQGMKMVSASSISDPIIQLIASLALAFVLYAASFPSVMDSLTAGTITVVFSSMIALMRPLKSLTNVNAQFQRGMAACQTLFTILDSEQEKDEGKRVIERATGDVEFRNVTFTYPGRDVPALRNINLKIPAGKTVALVGRSGSGKSTIASLITRFYDIDEGEILMDGHDLREYTLASLRNQVALVSQNVHLFNDTVANNIAYARTEQYSREQIEEAARMAYAMDFINKMDNGLDTVIGENGVLLSGGQRQRIAIARALLRDSPILILDEATSALDTESERAIQAALDELQKNRTSLVIAHRLSTIEKADEIVVVEDGVIVERGTHNDLLEHRGVYAQLHKMQFGQ.

Helical transmembrane passes span 16–36 (LWPT…ALIL), 63–83 (VLVW…ITSY), 153–173 (IIGL…ILIV), 253–273 (PIIQ…ASFP), and 275–295 (VMDS…IALM). In terms of domain architecture, ABC transmembrane type-1 spans 28–310 (IVAGVALILN…LTNVNAQFQR (283 aa)). The region spanning 342-578 (VEFRNVTFTY…RGVYAQLHKM (237 aa)) is the ABC transporter domain. Position 376–383 (376–383 (GRSGSGKS)) interacts with ATP.

The protein belongs to the ABC transporter superfamily. Lipid exporter (TC 3.A.1.106) family. In terms of assembly, homodimer.

It localises to the cell inner membrane. The catalysed reaction is ATP + H2O + lipid A-core oligosaccharideSide 1 = ADP + phosphate + lipid A-core oligosaccharideSide 2.. In terms of biological role, involved in lipopolysaccharide (LPS) biosynthesis. Translocates lipid A-core from the inner to the outer leaflet of the inner membrane. Transmembrane domains (TMD) form a pore in the inner membrane and the ATP-binding domain (NBD) is responsible for energy generation. The sequence is that of ATP-dependent lipid A-core flippase from Escherichia coli O157:H7.